Consider the following 418-residue polypeptide: Pyrophosphate--fructose 6-phosphate 1-phosphotransferase (418 aa).

Gly13 is a diphosphate binding site. Asn111 is a binding site for Mg(2+). Residues 139–141, 187–189, Glu244, and 295–298 contribute to the substrate site; these read TID, MGR, and YLQR. Asp141 functions as the Proton acceptor in the catalytic mechanism.

This sequence belongs to the phosphofructokinase type A (PFKA) family. PPi-dependent PFK group II subfamily. Clade 'B2' sub-subfamily. In terms of assembly, homodimer. Mg(2+) serves as cofactor.

The protein localises to the cytoplasm. The catalysed reaction is beta-D-fructose 6-phosphate + diphosphate = beta-D-fructose 1,6-bisphosphate + phosphate + H(+). It functions in the pathway carbohydrate degradation; glycolysis; D-glyceraldehyde 3-phosphate and glycerone phosphate from D-glucose: step 3/4. Its activity is regulated as follows. Non-allosteric. Functionally, catalyzes the phosphorylation of D-fructose 6-phosphate, the first committing step of glycolysis. Uses inorganic phosphate (PPi) as phosphoryl donor instead of ATP like common ATP-dependent phosphofructokinases (ATP-PFKs), which renders the reaction reversible, and can thus function both in glycolysis and gluconeogenesis. Consistently, PPi-PFK can replace the enzymes of both the forward (ATP-PFK) and reverse (fructose-bisphosphatase (FBPase)) reactions. This chain is Pyrophosphate--fructose 6-phosphate 1-phosphotransferase, found in Xanthomonas campestris pv. campestris (strain B100).